The primary structure comprises 1238 residues: Lysine-specific demethylase JMJ703 (1238 aa).

Residues 56 to 79 are disordered; that stretch reads EECQPSAAVSRSDTPCSTSGTQTC. Residues 62 to 79 are compositionally biased toward polar residues; it reads AAVSRSDTPCSTSGTQTC. The JmjN domain maps to 154–195; the sequence is APVFYPTEEEFEDTLKYIESIRPMAEPYGICRIVPPSSWKPP. The disordered stretch occupies residues 215 to 266; it reads KVDKLQNRKSSKKGRRGGMMKRRKLAESEENSATAHTQTGMQQSPERFGFEP. Residues 221–238 are compositionally biased toward basic residues; the sequence is NRKSSKKGRRGGMMKRRK. The segment covering 245–259 has biased composition (polar residues); sequence NSATAHTQTGMQQSP. Residues 348-514 form the JmjC domain; that stretch reads KYAQSGWNLN…IGHNAVELYR (167 aa). Fe cation-binding residues include His394, Glu396, and His482. Disordered regions lie at residues 699–725, 777–798, 834–863, and 910–978; these read GPRR…QKDE, YNGG…SSPS, TGDS…SSLE, and ASSQ…LQRT. Positions 706–719 are enriched in low complexity; sequence SQASAVSLVSSSTS. The span at 910 to 923 shows a compositional bias: polar residues; sequence ASSQQFVRTGPWTQ. A compositionally biased stretch (low complexity) spans 924-936; that stretch reads SASHEASSPSTSA. Positions 964-978 are enriched in polar residues; it reads SFSNQQPNDGRLQRT. One can recognise an FYR N-terminal domain in the interval 1019 to 1077; sequence VVHRFKCSVEPLEIGVVLSGRLWSSSQAIFPKGFRSRVKYFSIVDPIQMAYYISEILDA. An FYR C-terminal domain is found at 1079–1169; it reads MQGPLFMVKL…HICTEYWRSR (91 aa).

Requires Fe(2+) as cofactor. As to expression, expressed in roots, leaf sheaths, stems and panicles.

It localises to the nucleus. It catalyses the reaction N(6),N(6),N(6)-trimethyl-L-lysyl(4)-[histone H3] + 3 2-oxoglutarate + 3 O2 = L-lysyl(4)-[histone H3] + 3 formaldehyde + 3 succinate + 3 CO2. Functionally, histone demethylase that demethylates 'Lys-4' (H3K4me) of histone H3 with a specific activity for H3K4me3, H3K4me2 and H3K4me1. No activity on H3K9me3/2/1, H3K27me3/2/1 and H3K36me3/2/1. Involved in the control of stem elongation by regulating methylation states of H3K4me3 on cytokinin oxidase (CKX) gene family, which may cause increased expression of CKX genes and reduced cytokinin levels. Prevents ectopic retrotransposition by regulating the levels of H3K4me3 in two non-LTR retrotransposons KARMA and LINE-1 (L1) and reinforcing their repressed states. The chain is Lysine-specific demethylase JMJ703 (JMJ703) from Oryza sativa subsp. japonica (Rice).